A 794-amino-acid polypeptide reads, in one-letter code: Signal transducer and activator of transcription 5A (794 aa).

At tyrosine 90 the chain carries Phosphotyrosine. Residues serine 128 and serine 193 each carry the phosphoserine modification. In terms of domain architecture, SH2 spans 589 to 686 (WNDGAILGFV…EVFSKYYTPV (98 aa)). At tyrosine 682 the chain carries Phosphotyrosine. Phosphotyrosine; by JAK2 is present on tyrosine 694. A disordered region spans residues 773 to 794 (DSLDSRLSPPAGLFTSARGSLS). At serine 780 the chain carries Phosphoserine.

Belongs to the transcription factor STAT family. As to quaternary structure, forms a homodimer or a heterodimer with a related family member. Binds NR3C1. Interacts with NCOA1 and SOCS7. Interacts with ERBB4. Interacts with EBF4. Interacts with CD69. In terms of processing, tyrosine phosphorylated in response to KITLG/SCF, IL2, IL3, IL7, IL15, CSF2/GMCSF, GH1, PRL, EPO and THPO. Activated KIT promotes phosphorylation on tyrosine residues and subsequent translocation to the nucleus. Tyrosine phosphorylated in response to constitutively activated FGFR1, FGFR2, FGFR3 and FGFR4. Tyrosine phosphorylation is required for DNA-binding activity and dimerization. Serine phosphorylation is also required for maximal transcriptional activity. Tyrosine phosphorylated in response to signaling via activated FLT3; wild-type FLT3 results in much weaker phosphorylation than constitutively activated mutant FLT3. Alternatively, can be phosphorylated by JAK2 at Tyr-694. Post-translationally, ISGylated.

It localises to the cytoplasm. It is found in the nucleus. In terms of biological role, carries out a dual function: signal transduction and activation of transcription. Mediates cellular responses to the cytokine KITLG/SCF and other growth factors. Mediates cellular responses to ERBB4. May mediate cellular responses to activated FGFR1, FGFR2, FGFR3 and FGFR4. Binds to the GAS element and activates PRL-induced transcription. Regulates the expression of milk proteins during lactation. This chain is Signal transducer and activator of transcription 5A (STAT5A), found in Homo sapiens (Human).